Here is a 228-residue protein sequence, read N- to C-terminus: Triosephosphate isomerase (228 aa).

A substrate-binding site is contributed by N12–K14. H96 (electrophile) is an active-site residue. E144 functions as the Proton acceptor in the catalytic mechanism. Residues I149, G184, and A205–S206 each bind substrate.

Belongs to the triosephosphate isomerase family. In terms of assembly, homotetramer; dimer of dimers.

It is found in the cytoplasm. It catalyses the reaction D-glyceraldehyde 3-phosphate = dihydroxyacetone phosphate. The protein operates within carbohydrate biosynthesis; gluconeogenesis. It participates in carbohydrate degradation; glycolysis; D-glyceraldehyde 3-phosphate from glycerone phosphate: step 1/1. Functionally, involved in the gluconeogenesis. Catalyzes stereospecifically the conversion of dihydroxyacetone phosphate (DHAP) to D-glyceraldehyde-3-phosphate (G3P). This chain is Triosephosphate isomerase, found in Pyrococcus furiosus (strain ATCC 43587 / DSM 3638 / JCM 8422 / Vc1).